Here is a 268-residue protein sequence, read N- to C-terminus: Hydroxyethylthiazole kinase (268 aa).

Residue methionine 47 coordinates substrate. ATP-binding residues include lysine 123 and threonine 170. Alanine 196 contacts substrate.

Belongs to the Thz kinase family. Mg(2+) is required as a cofactor.

It carries out the reaction 5-(2-hydroxyethyl)-4-methylthiazole + ATP = 4-methyl-5-(2-phosphooxyethyl)-thiazole + ADP + H(+). It functions in the pathway cofactor biosynthesis; thiamine diphosphate biosynthesis; 4-methyl-5-(2-phosphoethyl)-thiazole from 5-(2-hydroxyethyl)-4-methylthiazole: step 1/1. Functionally, catalyzes the phosphorylation of the hydroxyl group of 4-methyl-5-beta-hydroxyethylthiazole (THZ). This is Hydroxyethylthiazole kinase from Finegoldia magna (strain ATCC 29328 / DSM 20472 / WAL 2508) (Peptostreptococcus magnus).